We begin with the raw amino-acid sequence, 121 residues long: Large ribosomal subunit protein bL12 (121 aa).

This sequence belongs to the bacterial ribosomal protein bL12 family. In terms of assembly, homodimer. Part of the ribosomal stalk of the 50S ribosomal subunit. Forms a multimeric L10(L12)X complex, where L10 forms an elongated spine to which 2 to 4 L12 dimers bind in a sequential fashion. Binds GTP-bound translation factors.

In terms of biological role, forms part of the ribosomal stalk which helps the ribosome interact with GTP-bound translation factors. Is thus essential for accurate translation. This chain is Large ribosomal subunit protein bL12, found in Anoxybacillus flavithermus (strain DSM 21510 / WK1).